The primary structure comprises 526 residues: D-arabinono-1,4-lactone oxidase (526 aa).

The FAD-binding PCMH-type domain maps to 19 to 193 (YSAKPERYFQ…VSATIRVVPG (175 aa)). Histidine 56 is modified (pros-8alpha-FAD histidine).

Belongs to the oxygen-dependent FAD-linked oxidoreductase family. As to quaternary structure, monomer. FAD is required as a cofactor. In terms of processing, the N-terminus is blocked.

Its subcellular location is the mitochondrion membrane. The catalysed reaction is D-arabinono-1,4-lactone + O2 = dehydro-D-arabinono-1,4-lactone + H2O2 + H(+). It participates in cofactor biosynthesis; D-erythroascorbate biosynthesis; dehydro-D-arabinono-1,4-lactone from D-arabinose: step 2/2. Its function is as follows. Can oxidize L-gulono-1,4-lactone as well as D-arabinono-1,4-lactone and L-galactono-1,4-lactone. The sequence is that of D-arabinono-1,4-lactone oxidase (ALO1) from Saccharomyces cerevisiae (strain ATCC 204508 / S288c) (Baker's yeast).